We begin with the raw amino-acid sequence, 198 residues long: ATP-dependent Clp protease proteolytic subunit (198 aa).

Residue Ser98 is the Nucleophile of the active site. The active site involves His123.

The protein belongs to the peptidase S14 family. As to quaternary structure, fourteen ClpP subunits assemble into 2 heptameric rings which stack back to back to give a disk-like structure with a central cavity, resembling the structure of eukaryotic proteasomes.

The protein resides in the cytoplasm. The enzyme catalyses Hydrolysis of proteins to small peptides in the presence of ATP and magnesium. alpha-casein is the usual test substrate. In the absence of ATP, only oligopeptides shorter than five residues are hydrolyzed (such as succinyl-Leu-Tyr-|-NHMec, and Leu-Tyr-Leu-|-Tyr-Trp, in which cleavage of the -Tyr-|-Leu- and -Tyr-|-Trp bonds also occurs).. In terms of biological role, cleaves peptides in various proteins in a process that requires ATP hydrolysis. Has a chymotrypsin-like activity. Plays a major role in the degradation of misfolded proteins. The protein is ATP-dependent Clp protease proteolytic subunit of Bacillus pumilus (strain SAFR-032).